The sequence spans 151 residues: Acidic phospholipase A2 2 (151 aa).

An N-terminal signal peptide occupies residues 1 to 27; sequence MYPAHLLVLLAVCVSLLGAASIPARPL. Disulfide bonds link Cys-38-Cys-104, Cys-54-Cys-151, Cys-56-Cys-72, Cys-71-Cys-132, Cys-78-Cys-125, Cys-88-Cys-118, and Cys-111-Cys-123. Ca(2+) is bound by residues Tyr-55, Gly-57, and Gly-59. The active site involves His-75. Asp-76 serves as a coordination point for Ca(2+). The active site involves Asp-126.

The protein belongs to the phospholipase A2 family. Group I subfamily. D49 sub-subfamily. Requires Ca(2+) as cofactor. Expressed by the venom gland.

The protein resides in the secreted. It catalyses the reaction a 1,2-diacyl-sn-glycero-3-phosphocholine + H2O = a 1-acyl-sn-glycero-3-phosphocholine + a fatty acid + H(+). In terms of biological role, PLA2 catalyzes the calcium-dependent hydrolysis of the 2-acyl groups in 3-sn-phosphoglycerides. This chain is Acidic phospholipase A2 2, found in Tropidechis carinatus (Australian rough-scaled snake).